The primary structure comprises 242 residues: Small ribosomal subunit protein uS2 (242 aa).

Belongs to the universal ribosomal protein uS2 family.

This is Small ribosomal subunit protein uS2 from Tolumonas auensis (strain DSM 9187 / NBRC 110442 / TA 4).